The chain runs to 900 residues: Suppressor of activated egl-4 protein 1 (900 aa).

Disordered stretches follow at residues 1 to 75 (MPPP…HLPT), 340 to 380 (PVAE…SRKN), and 406 to 425 (WASTSSADEKMQTERKESLE). Over residues 53–75 (ASGQQHRPSIMSGQSHQNNHLPT) the composition is skewed to polar residues. Composition is skewed to basic and acidic residues over residues 358-377 (GDMKHLMNGKKRSEDGDGPS) and 412-425 (ADEKMQTERKESLE). The 94-residue stretch at 451 to 544 (PHINLGKNYQ…AAVEDLLRSD (94 aa)) folds into the ELM2 domain. An SANT domain is found at 560-611 (NDSVLWTPDEIYQFQDAIYQSEKDFDKVAVELPGKSVKECVQFYYTWKKDCP). A disordered region spans residues 710–729 (PTAPRAHHTPSASASKKGAQ). A C2H2-type zinc finger spans residues 736-758 (FHCRLCDKCFEKVKSLNAHMKSH).

As to quaternary structure, may be a component of a histone deacetylase complex containing saeg-2, saeg-1 and hda-2. May interact with egl-4. As to expression, ubiquitously expressed.

Its subcellular location is the nucleus. As a likely component of a histone deacetylase complex, together with saeg-2 and hda-2, functions downstream of the cAMP-dependent kinase egl-4 to regulate the expression of genes required for egg-laying and foraging. The polypeptide is Suppressor of activated egl-4 protein 1 (Caenorhabditis elegans).